The following is a 539-amino-acid chain: MWRVPGLLCVRVARKSKFSGSWNRPAAFMSTLLINQPQYAWLKELGLREENDGVYNGSWGGRGEVITTYCPANNEPIARVRQASMADYEETVEKAREAWSIWADVPAPKRGEVVRQIGDALREKIQVLGSLVSLEMGKILVEGVGEVQEYVDVCDYAVGLSRMIGGPILPSERPGHALIEQWNPVGLVGIITAFNFPVAVYGWNNAIAMICGNACLWKGAPTTSLISVAVTKIIAKVLEDNKLPGAICSLTCGGADIGTAMAKDERVDLLSFTGSTQVGKQVALMVQERFGRSLLELGGNNAIIAFEDADLSLVVPSALFAAVGTAGQRCTTARRLFLHESIHDEVVNRLKKAYAQIRVGNPWDSNVLYGPLHTKQAVSMFLGAVEEAKKEGGTVVYGGKVMDRPGNYVEPTIVTGLDHDASIVHTETFAPILYVFKFKNEDEVFAWNNEVKQGLSSSIFTKDMGRIFRWLGPKGSDCGIVNVNIPTSGAEIGGAFGGEKHTGGGRESGSDAWKQYMRRSTCTINYSKDLPLAQGIKFQ.

The N-terminal 26 residues, 1-26 (MWRVPGLLCVRVARKSKFSGSWNRPA), are a transit peptide targeting the mitochondrion. Position 94 is an N6-acetyllysine; alternate (Lys94). Lys94 is modified (N6-succinyllysine; alternate). Residues 192-194 (TAF), Lys218, 258-259 (GT), 274-275 (GS), 274-279 (GSTQVG), and 296-297 (EL) each bind NAD(+). The Proton acceptor role is filled by Glu296. Cys330 (nucleophile) is an active-site residue. Thr331 is a binding site for (S)-2-amino-6-oxohexanoate. An NAD(+)-binding site is contributed by Glu427. An N6-acetyllysine modification is found at Lys462. (S)-2-amino-6-oxohexanoate is bound by residues Gly489 and Ala490. Lys500 is subject to N6-acetyllysine. Lys537 is modified (N6-succinyllysine).

It belongs to the aldehyde dehydrogenase family. As to quaternary structure, homotetramer.

The protein resides in the cytoplasm. Its subcellular location is the cytosol. The protein localises to the nucleus. It localises to the mitochondrion. The enzyme catalyses nonanal + NAD(+) + H2O = nonanoate + NADH + 2 H(+). It catalyses the reaction (S)-2-amino-6-oxohexanoate + NAD(+) + H2O = L-2-aminoadipate + NADH + 2 H(+). It carries out the reaction betaine aldehyde + NAD(+) + H2O = glycine betaine + NADH + 2 H(+). The catalysed reaction is an aldehyde + NAD(+) + H2O = a carboxylate + NADH + 2 H(+). The enzyme catalyses hexanal + NAD(+) + H2O = hexanoate + NADH + 2 H(+). It catalyses the reaction octanal + NAD(+) + H2O = octanoate + NADH + 2 H(+). It carries out the reaction (E)-non-2-enal + NAD(+) + H2O = (E)-non-2-enoate + NADH + 2 H(+). The catalysed reaction is (E)-4-hydroxynon-2-enal + NAD(+) + H2O = (E)-4-hydroxynon-2-enoate + NADH + 2 H(+). The protein operates within amine and polyamine biosynthesis; betaine biosynthesis via choline pathway; betaine from betaine aldehyde: step 1/1. Functionally, multifunctional enzyme mediating important protective effects. Metabolizes betaine aldehyde to betaine, an important cellular osmolyte and methyl donor. Protects cells from oxidative stress by metabolizing a number of lipid peroxidation-derived aldehydes. Involved in lysine catabolism. This is Alpha-aminoadipic semialdehyde dehydrogenase (ALDH7A1) from Bos taurus (Bovine).